A 697-amino-acid polypeptide reads, in one-letter code: Ribosomal RNA large subunit methyltransferase K/L (697 aa).

Residues 43–154 (ILYNSLMWSR…QNLVHIMLDL (112 aa)) form the THUMP domain.

The protein belongs to the methyltransferase superfamily. RlmKL family.

The protein resides in the cytoplasm. It catalyses the reaction guanosine(2445) in 23S rRNA + S-adenosyl-L-methionine = N(2)-methylguanosine(2445) in 23S rRNA + S-adenosyl-L-homocysteine + H(+). It carries out the reaction guanosine(2069) in 23S rRNA + S-adenosyl-L-methionine = N(2)-methylguanosine(2069) in 23S rRNA + S-adenosyl-L-homocysteine + H(+). In terms of biological role, specifically methylates the guanine in position 2445 (m2G2445) and the guanine in position 2069 (m7G2069) of 23S rRNA. The chain is Ribosomal RNA large subunit methyltransferase K/L from Buchnera aphidicola subsp. Schizaphis graminum (strain Sg).